The sequence spans 835 residues: Envelope glycoprotein gp160 (835 aa).

The first 25 residues, 1 to 25, serve as a signal peptide directing secretion; it reads MKVTEMQKNWLICCLLIGLIKIIGS. Residues 26 to 656 lie on the Extracellular side of the membrane; that stretch reads ELWVTVYYGV…ITKWLWYIKI (631 aa). Cys-47 and Cys-67 are joined by a disulfide. Residues Asn-81, Asn-131, Asn-135, Asn-144, Asn-148, Asn-175, Asn-176, Asn-180, Asn-190, Asn-227, Asn-234, Asn-255, Asn-267, Asn-278, Asn-284, Asn-290, Asn-322, Asn-330, and Asn-342 are each glycosylated (N-linked (GlcNAc...) asparagine; by host). Disulfide bonds link Cys-112–Cys-198, Cys-119–Cys-189, Cys-124–Cys-145, Cys-211–Cys-240, and Cys-221–Cys-232. Residues 124–144 form a V1 region; the sequence is CSSWRSVNNSVNQTNHVQMQN. Positions 145-189 are V2; the sequence is CSFNVTTELRDKKKQVYSLFYMGDIIPLDTNNSSGNNSQYRLINC. Positions 285–318 are V3; the sequence is CTRPGNKTRGQVQIGPGMTFYNIENIIGDTRQAY. An intrachain disulfide couples Cys-285 to Cys-319. Residues 348-358 form a CD4-binding loop region; it reads NPGGDLEVTNL. 2 disulfides stabilise this stretch: Cys-362–Cys-417 and Cys-369–Cys-390. The V4 stretch occupies residues 369 to 390; it reads CNTSQLFTNQNGNTTGNITLQC. Residues Asn-370, Asn-381, Asn-385, and Asn-420 are each glycosylated (N-linked (GlcNAc...) asparagine; by host). The V5 stretch occupies residues 433-441; that stretch reads TEKYTIYPT. A fusion peptide region spans residues 482 to 503; the sequence is AAFGLGALFLGFLGAAGSTMGA. Positions 545-563 are immunosuppression; sequence KQLQARVLAIERYLRDQQI. Cys-569 and Cys-575 form a disulfide bridge. Asn-582, Asn-588, Asn-597, and Asn-609 each carry an N-linked (GlcNAc...) asparagine; by host glycan. Positions 605–639 form a coiled coil; that stretch reads EQVRNYSGVIFGLLEQAQEQQSINEKSLLELDQWS. The MPER; binding to GalCer stretch occupies residues 634-655; sequence ELDQWSSLWNWFDITKWLWYIK. The helical transmembrane segment at 657 to 677 threads the bilayer; sequence FIMVVAGIVGIRIISIIMSMV. Residues 678 to 835 are Cytoplasmic-facing; it reads ARVRQGYSPL…IRQGLERALL (158 aa). Positions 684 to 687 match the YXXL motif; contains endocytosis signal motif; the sequence is YSPL. The Di-leucine internalization motif motif lies at 834-835; that stretch reads LL.

Belongs to the HIV-1 env protein family. As to quaternary structure, the mature envelope protein (Env) consists of a homotrimer of non-covalently associated gp120-gp41 heterodimers. The resulting complex protrudes from the virus surface as a spike. There seems to be as few as 10 spikes on the average virion. Interacts with host CD4, CCR5 and CXCR4. Gp120 also interacts with the C-type lectins CD209/DC-SIGN and CLEC4M/DC-SIGNR (collectively referred to as DC-SIGN(R)). Gp120 and gp41 interact with GalCer. Gp120 interacts with host ITGA4/ITGB7 complex; on CD4+ T-cells, this interaction results in rapid activation of integrin ITGAL/LFA-1, which facilitates efficient cell-to-cell spreading of HIV-1. Gp120 interacts with cell-associated heparan sulfate; this interaction increases virus infectivity on permissive cells and may be involved in infection of CD4- cells. The mature envelope protein (Env) consists of a homotrimer of non-covalently associated gp120-gp41 heterodimers. The resulting complex protrudes from the virus surface as a spike. There seems to be as few as 10 spikes on the average virion. Post-translationally, highly glycosylated by host. The high number of glycan on the protein is reffered to as 'glycan shield' because it contributes to hide protein sequence from adaptive immune system. Palmitoylation of the transmembrane protein and of Env polyprotein (prior to its proteolytic cleavage) is essential for their association with host cell membrane lipid rafts. Palmitoylation is therefore required for envelope trafficking to classical lipid rafts, but not for viral replication. In terms of processing, specific enzymatic cleavages in vivo yield mature proteins. Envelope glycoproteins are synthesized as an inactive precursor that is heavily N-glycosylated and processed likely by host cell furin in the Golgi to yield the mature SU and TM proteins. The cleavage site between SU and TM requires the minimal sequence [KR]-X-[KR]-R. About 2 of the 9 disulfide bonds of gp41 are reduced by P4HB/PDI, following binding to CD4 receptor.

The protein resides in the virion membrane. The protein localises to the host cell membrane. Its subcellular location is the host endosome membrane. Its function is as follows. Attaches the virus to the host lymphoid cell by binding to the primary receptor CD4. This interaction induces a structural rearrangement creating a high affinity binding site for a chemokine coreceptor like CXCR4 and/or CCR5. Acts as a ligand for CD209/DC-SIGN and CLEC4M/DC-SIGNR, which are respectively found on dendritic cells (DCs), and on endothelial cells of liver sinusoids and lymph node sinuses. These interactions allow capture of viral particles at mucosal surfaces by these cells and subsequent transmission to permissive cells. HIV subverts the migration properties of dendritic cells to gain access to CD4+ T-cells in lymph nodes. Virus transmission to permissive T-cells occurs either in trans (without DCs infection, through viral capture and transmission), or in cis (following DCs productive infection, through the usual CD4-gp120 interaction), thereby inducing a robust infection. In trans infection, bound virions remain infectious over days and it is proposed that they are not degraded, but protected in non-lysosomal acidic organelles within the DCs close to the cell membrane thus contributing to the viral infectious potential during DCs' migration from the periphery to the lymphoid tissues. On arrival at lymphoid tissues, intact virions recycle back to DCs' cell surface allowing virus transmission to CD4+ T-cells. Functionally, acts as a class I viral fusion protein. Under the current model, the protein has at least 3 conformational states: pre-fusion native state, pre-hairpin intermediate state, and post-fusion hairpin state. During fusion of viral and target intracellular membranes, the coiled coil regions (heptad repeats) assume a trimer-of-hairpins structure, positioning the fusion peptide in close proximity to the C-terminal region of the ectodomain. The formation of this structure appears to drive apposition and subsequent fusion of viral and target cell membranes. Complete fusion occurs in host cell endosomes and is dynamin-dependent, however some lipid transfer might occur at the plasma membrane. The virus undergoes clathrin-dependent internalization long before endosomal fusion, thus minimizing the surface exposure of conserved viral epitopes during fusion and reducing the efficacy of inhibitors targeting these epitopes. Membranes fusion leads to delivery of the nucleocapsid into the cytoplasm. In terms of biological role, oligomerizes in the host endoplasmic reticulum into predominantly trimers. In a second time, gp160 transits in the host Golgi, where glycosylation is completed. The precursor is then proteolytically cleaved in the trans-Golgi and thereby activated by cellular furin or furin-like proteases to produce gp120 and gp41. The sequence is that of Envelope glycoprotein gp160 from Pan troglodytes (Chimpanzee).